We begin with the raw amino-acid sequence, 152 residues long: UPF0266 membrane protein YobD (152 aa).

3 consecutive transmembrane segments (helical) span residues 6–26 (LVLI…QFIM), 45–65 (VDSV…VTSH), and 67–87 (AQMT…IFWI).

This sequence belongs to the UPF0266 family.

The protein localises to the cell inner membrane. The polypeptide is UPF0266 membrane protein YobD (Salmonella arizonae (strain ATCC BAA-731 / CDC346-86 / RSK2980)).